The primary structure comprises 214 residues: Thiamine-phosphate synthase (214 aa).

4-amino-2-methyl-5-(diphosphooxymethyl)pyrimidine is bound by residues 37–41 (QYREK) and Asn-73. Mg(2+) contacts are provided by Asp-74 and Asp-93. Residue Ser-112 participates in 4-amino-2-methyl-5-(diphosphooxymethyl)pyrimidine binding. 139–141 (TIS) is a 2-[(2R,5Z)-2-carboxy-4-methylthiazol-5(2H)-ylidene]ethyl phosphate binding site. 4-amino-2-methyl-5-(diphosphooxymethyl)pyrimidine is bound at residue Lys-142. 2-[(2R,5Z)-2-carboxy-4-methylthiazol-5(2H)-ylidene]ethyl phosphate-binding positions include Gly-171 and 191 to 192 (IS).

This sequence belongs to the thiamine-phosphate synthase family. It depends on Mg(2+) as a cofactor.

It catalyses the reaction 2-[(2R,5Z)-2-carboxy-4-methylthiazol-5(2H)-ylidene]ethyl phosphate + 4-amino-2-methyl-5-(diphosphooxymethyl)pyrimidine + 2 H(+) = thiamine phosphate + CO2 + diphosphate. It carries out the reaction 2-(2-carboxy-4-methylthiazol-5-yl)ethyl phosphate + 4-amino-2-methyl-5-(diphosphooxymethyl)pyrimidine + 2 H(+) = thiamine phosphate + CO2 + diphosphate. The catalysed reaction is 4-methyl-5-(2-phosphooxyethyl)-thiazole + 4-amino-2-methyl-5-(diphosphooxymethyl)pyrimidine + H(+) = thiamine phosphate + diphosphate. The protein operates within cofactor biosynthesis; thiamine diphosphate biosynthesis; thiamine phosphate from 4-amino-2-methyl-5-diphosphomethylpyrimidine and 4-methyl-5-(2-phosphoethyl)-thiazole: step 1/1. In terms of biological role, condenses 4-methyl-5-(beta-hydroxyethyl)thiazole monophosphate (THZ-P) and 2-methyl-4-amino-5-hydroxymethyl pyrimidine pyrophosphate (HMP-PP) to form thiamine monophosphate (TMP). This chain is Thiamine-phosphate synthase, found in Listeria monocytogenes serotype 4a (strain HCC23).